The primary structure comprises 200 residues: Lipopolysaccharide core heptose(II)-phosphate phosphatase (200 aa).

Residues 1 to 25 form the signal peptide; sequence MLAFCRSSLKSKKYFIILLALAAIA.

Belongs to the phosphoglycerate mutase family. Ais subfamily.

Its subcellular location is the periplasm. It functions in the pathway bacterial outer membrane biogenesis; lipopolysaccharide metabolism. In terms of biological role, catalyzes the dephosphorylation of heptose(II) of the outer membrane lipopolysaccharide core. In Escherichia coli O6:H1 (strain CFT073 / ATCC 700928 / UPEC), this protein is Lipopolysaccharide core heptose(II)-phosphate phosphatase.